We begin with the raw amino-acid sequence, 277 residues long: Elongation factor Ts (277 aa).

The segment at 81-84 is involved in Mg(2+) ion dislocation from EF-Tu; that stretch reads TDFV.

The protein belongs to the EF-Ts family.

It is found in the cytoplasm. In terms of biological role, associates with the EF-Tu.GDP complex and induces the exchange of GDP to GTP. It remains bound to the aminoacyl-tRNA.EF-Tu.GTP complex up to the GTP hydrolysis stage on the ribosome. The protein is Elongation factor Ts of Amoebophilus asiaticus (strain 5a2).